A 443-amino-acid polypeptide reads, in one-letter code: uncharacterized protein (443 aa).

The disordered stretch occupies residues 1–21 (MQSVTPPPTQQGKPDPTNSDM). A compositionally biased stretch (polar residues) spans 10-20 (QQGKPDPTNSD).

This is an uncharacterized protein from Caenorhabditis elegans.